The chain runs to 385 residues: Guanine nucleotide-binding protein alpha-5 subunit (385 aa).

Residue Gly2 is the site of N-myristoyl glycine attachment. Residue Cys6 is the site of S-palmitoyl cysteine attachment. Positions 32–385 (RKIKMLLLGV…GKNYEDTNLE (354 aa)) constitute a G-alpha domain. Residues 35 to 48 (KMLLLGVTDSGKST) form a G1 motif region. GTP contacts are provided by residues 40 to 47 (GVTDSGKS), 174 to 180 (IHMRQTT), 199 to 203 (DVGGQ), 298 to 301 (NKKD), and Ala357. Residues Ser47 and Thr180 each contribute to the Mg(2+) site. The interval 172-180 (DLIHMRQTT) is G2 motif. The interval 195–204 (IRLIDVGGQK) is G3 motif. Residues 294–301 (MLFLNKKD) form a G4 motif region. Residues 355–360 (TQATVT) are G5 motif.

It belongs to the G-alpha family. G proteins are composed of 3 units; alpha, beta and gamma. The alpha chain contains the guanine nucleotide binding site.

Its function is as follows. Guanine nucleotide-binding proteins (G proteins) are involved as modulators or transducers in various transmembrane signaling systems. This Caenorhabditis elegans protein is Guanine nucleotide-binding protein alpha-5 subunit (gpa-5).